We begin with the raw amino-acid sequence, 530 residues long: Capsid protein VP1 (530 aa).

The tract at residues 1–20 (MMMASKDATSSVDGASGAGQ) is disordered. The shell domain stretch occupies residues 1-225 (MMMASKDATS…FLFLVPPTVE (225 aa)). The segment at 226–278 (QKTRPFTLPNLPLSSLSNSRAPLPISSMGISPDNVQSVQFQNGRCTLDGRLVG) is P1 sub-domain 1. Positions 226–530 (QKTRPFTLPN…SARGRLGLRR (305 aa)) are protruding domain. The P2 sub-domain stretch occupies residues 279-405 (TTPVSLSHVA…GSSITEATHL (127 aa)). A P1 sub-domain 2 region spans residues 406 to 530 (APSVYPPGFG…SARGRLGLRR (125 aa)). The interval 523–530 (RGRLGLRR) is plays a role in binding to host histo-blood group structures antigens and in the formation of P-particles.

Belongs to the caliciviridae capsid protein family. Homodimer. Homomultimer. Interacts with the minor capsid protein VP2. Interacts (via C-terminus) with host type I histo-blood group structures antigens at the surface of target cells. In terms of processing, may be cleaved by host protease to generate soluble capsid protein. Assembled capsid cannot be cleaved.

It localises to the virion. Its subcellular location is the host cytoplasm. Functionally, capsid protein self assembles to form an icosahedral capsid with a T=3 symmetry, about 38 nm in diameter, and consisting of 180 capsid proteins. A smaller form of capsid with a diameter of 23 nm might be capsid proteins assembled as icosahedron with T=1 symmetry. The capsid encapsulates the genomic RNA and is decorated with VP2 proteins. Attaches virion to target cells by binding histo-blood group antigens (HBGAs) present on gastroduodenal epithelial cells. Its function is as follows. The soluble capsid protein may play a role in viral immunoevasion. In Norovirus (strain Human/NoV/United States/Norwalk/1968/GI) (Hu/NV/NV/1968/US), this protein is Capsid protein VP1.